The primary structure comprises 424 residues: Tubby protein homolog 1 (424 aa).

Positions 19-47 are disordered; it reads MLEDKQKQKRHQSAGSVRTTTTTSSMSMN. The span at 37–47 shows a compositional bias: low complexity; that stretch reads TTTTTSSMSMN.

The protein belongs to the TUB family. Interacts with rgb-3.

It is found in the cytoplasm. Its subcellular location is the cell projection. The protein localises to the axon. It localises to the dendrite. The protein resides in the cilium. Its function is as follows. Has a role in fat regulation independent of daf-16. Implicated in ciliar sensory function which is required for normal sensory behavior such as chemotaxis. Functions in life span control via the insulin/IGF-1 pathway. Thought to be involved in neuronal trafficking. This Caenorhabditis briggsae protein is Tubby protein homolog 1.